Reading from the N-terminus, the 453-residue chain is Polar tube protein 1 (453 aa).

Residues 1–22 (MKGISKILSASIMVMKLGNVYS) form the signal peptide. The tract at residues 61–87 (YVPSSPTTSSSTPGTNNDNETSPTTED) is disordered. A compositionally biased stretch (low complexity) spans 63-73 (PSSPTTSSSTP). Residues 74–87 (GTNNDNETSPTTED) show a composition bias toward polar residues. N-linked (GlcNAc...) asparagine glycans are attached at residues Asn-79, Asn-225, Asn-245, Asn-265, Asn-285, Asn-305, Asn-325, and Asn-344. Tandem repeats lie at residues 214-233 (PCLP…GIVY), 234-253 (PCQP…GVIS), 254-273 (PCQP…GIVY), 274-293 (PCQP…GVIS), 294-313 (PCQP…GIVY), and 314-333 (PCQP…GVIS). A 6 X 20 AA approximate tandem repeats region spans residues 214–333 (PCLPTQGGDG…SNQTIPGVIS (120 aa)).

Post-translationally, O-mannosylated. O-mannosylation has functional significance for the ability of microsporidia to invade their host cells.

It localises to the spore polar tube. Its function is as follows. Involved in formation of a polar tube through which the infectious agent is passed on to the host cell. The sequence is that of Polar tube protein 1 (PTP1) from Encephalitozoon hellem (Microsporidian parasite).